We begin with the raw amino-acid sequence, 202 residues long: Xanthine phosphoribosyltransferase (202 aa).

Xanthine-binding residues include Leu20 and Asn27. 128 to 132 serves as a coordination point for 5-phospho-alpha-D-ribose 1-diphosphate; that stretch reads ANGEA. Xanthine is bound at residue Lys156.

This sequence belongs to the purine/pyrimidine phosphoribosyltransferase family. Xpt subfamily. In terms of assembly, homodimer.

It is found in the cytoplasm. The enzyme catalyses XMP + diphosphate = xanthine + 5-phospho-alpha-D-ribose 1-diphosphate. Its pathway is purine metabolism; XMP biosynthesis via salvage pathway; XMP from xanthine: step 1/1. Functionally, converts the preformed base xanthine, a product of nucleic acid breakdown, to xanthosine 5'-monophosphate (XMP), so it can be reused for RNA or DNA synthesis. The polypeptide is Xanthine phosphoribosyltransferase (Alkaliphilus metalliredigens (strain QYMF)).